Consider the following 392-residue polypeptide: 2-oxoisovalerate dehydrogenase subunit beta, mitochondrial (392 aa).

The transit peptide at 1–50 directs the protein to the mitochondrion; the sequence is MAAVAAFAGWLLRLRAAGADGPWRRLCGAGLSRGFLQSASAYGAAAQRRQ. Y152 serves as a coordination point for thiamine diphosphate. K(+) is bound by residues G178, L180, T181, C228, and D231. Position 232 is an N6-acetyllysine (K232). Residue N233 participates in K(+) binding. Position 241 is an N6-acetyllysine (K241).

In terms of assembly, heterotetramer of 2 alpha/BCKDHA and 2 beta chains/BCKDHB that forms the branched-chain alpha-keto acid decarboxylase (E1) component of the BCKD complex. The branched-chain alpha-ketoacid dehydrogenase is a large complex composed of three major building blocks E1, E2 and E3. It is organized around E2, a 24-meric cubic core composed of DBT, to which are associated 6 to 12 copies of E1, and approximately 6 copies of the dehydrogenase E3, a DLD dimer. Thiamine diphosphate serves as cofactor.

The protein localises to the mitochondrion matrix. It carries out the reaction N(6)-[(R)-lipoyl]-L-lysyl-[protein] + 3-methyl-2-oxobutanoate + H(+) = N(6)-[(R)-S(8)-2-methylpropanoyldihydrolipoyl]-L-lysyl-[protein] + CO2. Its function is as follows. Together with BCKDHA forms the heterotetrameric E1 subunit of the mitochondrial branched-chain alpha-ketoacid dehydrogenase (BCKD) complex. The BCKD complex catalyzes the multi-step oxidative decarboxylation of alpha-ketoacids derived from the branched-chain amino-acids valine, leucine and isoleucine producing CO2 and acyl-CoA which is subsequently utilized to produce energy. The E1 subunit catalyzes the first step with the decarboxylation of the alpha-ketoacid forming an enzyme-product intermediate. A reductive acylation mediated by the lipoylamide cofactor of E2 extracts the acyl group from the E1 active site for the next step of the reaction. This is 2-oxoisovalerate dehydrogenase subunit beta, mitochondrial (BCKDHB) from Bos taurus (Bovine).